A 634-amino-acid chain; its full sequence is BTB/POZ domain-containing protein At1g03010 (634 aa).

One can recognise a BTB domain in the interval 38-103; the sequence is SDLTVQVGSS…CYGINIEINL (66 aa). The 299-residue stretch at 205–503 folds into the NPH3 domain; that stretch reads DWWGKSLAVL…VQVLYFEQIR (299 aa). Residue tyrosine 444 is modified to Phosphotyrosine. The stretch at 542–580 forms a coiled coil; the sequence is RDNYASVRRENRELKLEVARMRMRLTDLEKDHISIKQEL.

It belongs to the NPH3 family.

It functions in the pathway protein modification; protein ubiquitination. Its function is as follows. May act as a substrate-specific adapter of an E3 ubiquitin-protein ligase complex (CUL3-RBX1-BTB) which mediates the ubiquitination and subsequent proteasomal degradation of target proteins. The chain is BTB/POZ domain-containing protein At1g03010 from Arabidopsis thaliana (Mouse-ear cress).